The chain runs to 445 residues: Ribosomal protein uS12 methylthiotransferase RimO (445 aa).

Residues 4 to 119 (IKVALVSLGC…LLESIKVFLK (116 aa)) form the MTTase N-terminal domain. [4Fe-4S] cluster contacts are provided by Cys-13, Cys-48, Cys-82, Cys-156, Cys-160, and Cys-163. One can recognise a Radical SAM core domain in the interval 142 to 372 (TTPTYTAYVR…MILQQSISKD (231 aa)). The TRAM domain occupies 375 to 441 (KEKIGKIYEV…EYDLIGVVYN (67 aa)).

Belongs to the methylthiotransferase family. RimO subfamily. Requires [4Fe-4S] cluster as cofactor.

It localises to the cytoplasm. The catalysed reaction is L-aspartate(89)-[ribosomal protein uS12]-hydrogen + (sulfur carrier)-SH + AH2 + 2 S-adenosyl-L-methionine = 3-methylsulfanyl-L-aspartate(89)-[ribosomal protein uS12]-hydrogen + (sulfur carrier)-H + 5'-deoxyadenosine + L-methionine + A + S-adenosyl-L-homocysteine + 2 H(+). In terms of biological role, catalyzes the methylthiolation of an aspartic acid residue of ribosomal protein uS12. The sequence is that of Ribosomal protein uS12 methylthiotransferase RimO from Clostridium botulinum (strain Langeland / NCTC 10281 / Type F).